The following is a 210-amino-acid chain: Glutathione S-transferase P (210 aa).

The 80-residue stretch at 2 to 81 folds into the GST N-terminal domain; the sequence is PPYTVVYFPV…HLGRTLGLYG (80 aa). At Y4 the chain carries Phosphotyrosine; by EGFR. Glutathione contacts are provided by residues Y8, R14, W39, K45, and 52-53; that span reads QL. T62 carries the phosphothreonine modification. 65 to 66 is a glutathione binding site; sequence QS. The 122-residue stretch at 83–204 folds into the GST C-terminal domain; that stretch reads DQREAALVDM…ASPEHVNLPI (122 aa). 2 positions are modified to N6-succinyllysine: K103 and K116. K128 carries the N6-acetyllysine modification.

Belongs to the GST superfamily. Pi family. In terms of assembly, homodimer. Interacts with CDK5.

It is found in the cytoplasm. The protein resides in the mitochondrion. It localises to the nucleus. It catalyses the reaction RX + glutathione = an S-substituted glutathione + a halide anion + H(+). The enzyme catalyses prostaglandin J2 + glutathione = prostaglandin J2-S-(R)-glutathione. It carries out the reaction prostaglandin J2 + glutathione = prostaglandin J2-S-(S)-glutathione. The catalysed reaction is prostaglandin A2 + glutathione = prostaglandin A2-S-(S)-glutathione. It catalyses the reaction 11(S)-hydroxy-14(S),15(S)-epoxy-(5Z,8Z,12E)-eicosatrienoate + glutathione = (11S,15S)-dihydroxy-14(R)-S-glutathionyl-(5Z,8Z,12E)-eicosatrienoate. Its function is as follows. Conjugation of reduced glutathione to a wide number of exogenous and endogenous hydrophobic electrophiles. Involved in the formation of glutathione conjugates of both prostaglandin A2 (PGA2) and prostaglandin J2 (PGJ2). Participates in the formation of novel hepoxilin regioisomers. Negatively regulates CDK5 activity via p25/p35 translocation to prevent neurodegeneration. This is Glutathione S-transferase P (GSTP1) from Macaca mulatta (Rhesus macaque).